A 509-amino-acid chain; its full sequence is Bifunctional pantoate ligase/cytidylate kinase (509 aa).

A pantoate--beta-alanine ligase region spans residues 1–275; it reads MKKLIIRKTE…CGETRLIDHV (275 aa). 29-36 is a binding site for ATP; that stretch reads MGNLHDGH. The Proton donor role is filled by H36. Residue Q61 participates in (R)-pantoate binding. Q61 contributes to the beta-alanine binding site. 149 to 152 lines the ATP pocket; sequence GEKD. Q155 is a (R)-pantoate binding site. Position 186-189 (186-189) interacts with ATP; sequence LSSR. Residues 276 to 509 are cytidylate kinase; sequence FLMKRRPIIA…DKIPKESEIK (234 aa).

This sequence in the N-terminal section; belongs to the pantothenate synthetase family. In the C-terminal section; belongs to the cytidylate kinase family. Type 1 subfamily.

It localises to the cytoplasm. The enzyme catalyses (R)-pantoate + beta-alanine + ATP = (R)-pantothenate + AMP + diphosphate + H(+). The catalysed reaction is CMP + ATP = CDP + ADP. It carries out the reaction dCMP + ATP = dCDP + ADP. Its pathway is cofactor biosynthesis; (R)-pantothenate biosynthesis; (R)-pantothenate from (R)-pantoate and beta-alanine: step 1/1. Catalyzes the condensation of pantoate with beta-alanine in an ATP-dependent reaction via a pantoyl-adenylate intermediate. Functionally, catalyzes the transfer of a phosphate group from ATP to either CMP or dCMP to form CDP or dCDP and ADP, respectively. The polypeptide is Bifunctional pantoate ligase/cytidylate kinase (Prochlorococcus marinus (strain AS9601)).